Here is a 225-residue protein sequence, read N- to C-terminus: NAD(P)H-quinone oxidoreductase subunit K, chloroplastic (225 aa).

[4Fe-4S] cluster contacts are provided by cysteine 43, cysteine 44, cysteine 108, and cysteine 139.

The protein belongs to the complex I 20 kDa subunit family. NDH is composed of at least 16 different subunits, 5 of which are encoded in the nucleus. Requires [4Fe-4S] cluster as cofactor.

It localises to the plastid. The protein localises to the chloroplast thylakoid membrane. It carries out the reaction a plastoquinone + NADH + (n+1) H(+)(in) = a plastoquinol + NAD(+) + n H(+)(out). The catalysed reaction is a plastoquinone + NADPH + (n+1) H(+)(in) = a plastoquinol + NADP(+) + n H(+)(out). Its function is as follows. NDH shuttles electrons from NAD(P)H:plastoquinone, via FMN and iron-sulfur (Fe-S) centers, to quinones in the photosynthetic chain and possibly in a chloroplast respiratory chain. The immediate electron acceptor for the enzyme in this species is believed to be plastoquinone. Couples the redox reaction to proton translocation, and thus conserves the redox energy in a proton gradient. The protein is NAD(P)H-quinone oxidoreductase subunit K, chloroplastic of Olimarabidopsis pumila (Dwarf rocket).